Consider the following 140-residue polypeptide: Fluoride-specific ion channel FluC 1 (140 aa).

Helical transmembrane passes span 45–65, 82–102, and 106–126; these read IPSL…IGFL, FLGA…TQTI, and LFYG…GVFI. Positions 89 and 92 each coordinate Na(+).

It belongs to the fluoride channel Fluc/FEX (TC 1.A.43) family.

The protein resides in the cell membrane. The enzyme catalyses fluoride(in) = fluoride(out). Its activity is regulated as follows. Na(+) is not transported, but it plays an essential structural role and its presence is essential for fluoride channel function. Fluoride-specific ion channel. Important for reducing fluoride concentration in the cell, thus reducing its toxicity. This Methanospirillum hungatei JF-1 (strain ATCC 27890 / DSM 864 / NBRC 100397 / JF-1) protein is Fluoride-specific ion channel FluC 1.